We begin with the raw amino-acid sequence, 207 residues long: Large ribosomal subunit protein uL4 (207 aa).

A disordered region spans residues 44–85; that stretch reads MRQGTHKTKNRAEVSGGGRKPWRQKGTGRARQGSIRSPQWRG.

This sequence belongs to the universal ribosomal protein uL4 family. Part of the 50S ribosomal subunit.

In terms of biological role, one of the primary rRNA binding proteins, this protein initially binds near the 5'-end of the 23S rRNA. It is important during the early stages of 50S assembly. It makes multiple contacts with different domains of the 23S rRNA in the assembled 50S subunit and ribosome. Its function is as follows. Forms part of the polypeptide exit tunnel. The polypeptide is Large ribosomal subunit protein uL4 (Geobacillus thermodenitrificans (strain NG80-2)).